Here is a 375-residue protein sequence, read N- to C-terminus: 23S rRNA (uracil(747)-C(5))-methyltransferase RlmC (375 aa).

Residues Cys-3, Cys-11, Cys-14, and Cys-87 each contribute to the [4Fe-4S] cluster site. Residues Gln-212, Phe-241, Glu-262, and Asn-307 each contribute to the S-adenosyl-L-methionine site. Residue Cys-334 is the Nucleophile of the active site.

Belongs to the class I-like SAM-binding methyltransferase superfamily. RNA M5U methyltransferase family. RlmC subfamily.

It catalyses the reaction uridine(747) in 23S rRNA + S-adenosyl-L-methionine = 5-methyluridine(747) in 23S rRNA + S-adenosyl-L-homocysteine + H(+). Catalyzes the formation of 5-methyl-uridine at position 747 (m5U747) in 23S rRNA. The polypeptide is 23S rRNA (uracil(747)-C(5))-methyltransferase RlmC (Escherichia coli O7:K1 (strain IAI39 / ExPEC)).